Reading from the N-terminus, the 349-residue chain is Phosphate acyltransferase (349 aa).

This sequence belongs to the PlsX family. In terms of assembly, homodimer. Probably interacts with PlsY.

It localises to the cytoplasm. The catalysed reaction is a fatty acyl-[ACP] + phosphate = an acyl phosphate + holo-[ACP]. It functions in the pathway lipid metabolism; phospholipid metabolism. In terms of biological role, catalyzes the reversible formation of acyl-phosphate (acyl-PO(4)) from acyl-[acyl-carrier-protein] (acyl-ACP). This enzyme utilizes acyl-ACP as fatty acyl donor, but not acyl-CoA. The chain is Phosphate acyltransferase from Akkermansia muciniphila (strain ATCC BAA-835 / DSM 22959 / JCM 33894 / BCRC 81048 / CCUG 64013 / CIP 107961 / Muc).